The sequence spans 207 residues: Ribonuclease HII (207 aa).

One can recognise an RNase H type-2 domain in the interval 12-205; the sequence is GLVVGIDEVG…IRNMIEAEAH (194 aa). Residues Asp-18, Glu-19, and Asp-114 each contribute to the a divalent metal cation site.

It belongs to the RNase HII family. The cofactor is Mn(2+). Requires Mg(2+) as cofactor.

The protein localises to the cytoplasm. It catalyses the reaction Endonucleolytic cleavage to 5'-phosphomonoester.. In terms of biological role, endonuclease that specifically degrades the RNA of RNA-DNA hybrids. The protein is Ribonuclease HII of Gluconobacter oxydans (strain 621H) (Gluconobacter suboxydans).